Consider the following 491-residue polypeptide: Synaptotagmin-9 (491 aa).

Over 1 to 52 (MPGARDALCHQALQLLAELCARGALEHDSCQDFIYHLRDRARPRLRDPDISV) the chain is Vesicular. Residues 9–31 (CHQALQLLAELCARGALEHDSCQ) are cysteine motif. Residues 53–73 (SLLTLVVTACGLALFGVSLFV) traverse the membrane as a helical segment. Residues 74–491 (SWKLCWVPWR…AHWHSLLEKR (418 aa)) lie on the Cytoplasmic side of the membrane. Over residues 91–104 (SKDNNQEPLNYTDT) the composition is skewed to polar residues. The segment at 91-147 (SKDNNQEPLNYTDTETNEQENSEDFLDPPTPCPDSSMKISHTSPDIPLSTQPGGQDN) is disordered. The span at 105-116 (ETNEQENSEDFL) shows a compositional bias: acidic residues. The segment covering 127-144 (MKISHTSPDIPLSTQPGG) has biased composition (polar residues). At Ser-177 the chain carries Phosphoserine. C2 domains follow at residues 220-341 (ACGK…ILWK) and 352-485 (DLGE…AHWH). The Ca(2+) site is built by Asp-251, Asp-257, Asp-309, Phe-310, Asp-311, Ser-314, Asp-317, Asp-383, Asp-389, Asp-443, and Asp-445.

The protein belongs to the synaptotagmin family. As to quaternary structure, homodimer; disulfide-linked via the cysteine motif. Can also form heterodimers with SYT3, SYT6, SYT7 and SYT10. The cofactor is Ca(2+).

It is found in the cytoplasmic vesicle. The protein localises to the secretory vesicle. It localises to the synaptic vesicle membrane. Its function is as follows. May be involved in Ca(2+)-dependent exocytosis of secretory vesicles through Ca(2+) and phospholipid binding to the C2 domain or may serve as Ca(2+) sensors in the process of vesicular trafficking and exocytosis. The sequence is that of Synaptotagmin-9 (Syt9) from Rattus norvegicus (Rat).